The chain runs to 536 residues: Carboxypeptidase Y homolog A (536 aa).

The N-terminal stretch at 1–17 is a signal peptide; it reads MKFFTTGLLATAALAAA. The propeptide occupies 18 to 124; the sequence is QEQQVLQAED…KLHNYDLRVK (107 aa). 5 disulfides stabilise this stretch: Cys-172–Cys-412, Cys-306–Cys-320, Cys-330–Cys-353, Cys-337–Cys-346, and Cys-375–Cys-382. N-linked (GlcNAc...) asparagine glycosylation is present at Asn-203. Residue Ser-259 is part of the active site. Asp-451 is a catalytic residue. Residue Asn-502 is glycosylated (N-linked (GlcNAc...) asparagine). Residue His-513 is part of the active site.

Belongs to the peptidase S10 family.

The protein resides in the vacuole. The enzyme catalyses Release of a C-terminal amino acid with broad specificity.. In terms of biological role, vacuolar carboxypeptidase involved in degradation of small peptides. Digests preferentially peptides containing an aliphatic or hydrophobic residue in P1' position, as well as methionine, leucine or phenylalanine in P1 position of ester substrate. In Trichophyton rubrum (Athlete's foot fungus), this protein is Carboxypeptidase Y homolog A (cpyA).